A 35-amino-acid chain; its full sequence is Kunitz-type serine protease inhibitor G1 (35 aa).

One can recognise a BPTI/Kunitz inhibitor domain in the interval 6 to 35; the sequence is CKLPPDSGPCKGHFPAFYYDPVSSYCQKFI.

In terms of processing, contains three disulfide bonds. As to expression, expressed by the venom gland.

The protein localises to the secreted. Serine protease inhibitor. This chain is Kunitz-type serine protease inhibitor G1, found in Micrurus pyrrhocryptus (Coral snake).